The sequence spans 308 residues: Cytochrome b (308 aa).

4 consecutive transmembrane segments (helical) span residues 1-21 (FGLLLGICLIVQIVTGLLLAA), 45-66 (WLIRNLHANGASFFFICIYLHI), 81-101 (WNIGVILLLTLMATAFVGYVX), and 146-166 (FFALHFLLPFVFAGLTLVHLT). Heme b contacts are provided by histidine 51 and histidine 65. The heme b site is built by histidine 150 and histidine 164. Residue histidine 169 participates in a ubiquinone binding. Helical transmembrane passes span 194 to 214 (TKDVLGFVLMLIPLITLALFS), 256 to 276 (LGGVLALAASVLVLFLIPFLH), and 288 to 308 (LSQILFWTLVANLLMLTWVSN).

The protein belongs to the cytochrome b family. As to quaternary structure, the cytochrome bc1 complex contains 11 subunits: 3 respiratory subunits (MT-CYB, CYC1 and UQCRFS1), 2 core proteins (UQCRC1 and UQCRC2) and 6 low-molecular weight proteins (UQCRH/QCR6, UQCRB/QCR7, UQCRQ/QCR8, UQCR10/QCR9, UQCR11/QCR10 and a cleavage product of UQCRFS1). This cytochrome bc1 complex then forms a dimer. It depends on heme b as a cofactor.

The protein resides in the mitochondrion inner membrane. In terms of biological role, component of the ubiquinol-cytochrome c reductase complex (complex III or cytochrome b-c1 complex) that is part of the mitochondrial respiratory chain. The b-c1 complex mediates electron transfer from ubiquinol to cytochrome c. Contributes to the generation of a proton gradient across the mitochondrial membrane that is then used for ATP synthesis. The protein is Cytochrome b (MT-CYB) of Pomatostomus ruficeps (Chestnut-crowned babbler).